The chain runs to 213 residues: tRNA (guanine-N(7)-)-methyltransferase (213 aa).

Residues Glu44, Glu69, Asn96, and Asp118 each contribute to the S-adenosyl-L-methionine site. Residue Asp118 is part of the active site. Lys122 serves as a coordination point for substrate. The segment at 124-129 is interaction with RNA; sequence RHEKRR. Substrate-binding positions include Asp154 and 191 to 194; that span reads TEYE.

It belongs to the class I-like SAM-binding methyltransferase superfamily. TrmB family.

It carries out the reaction guanosine(46) in tRNA + S-adenosyl-L-methionine = N(7)-methylguanosine(46) in tRNA + S-adenosyl-L-homocysteine. It participates in tRNA modification; N(7)-methylguanine-tRNA biosynthesis. Functionally, catalyzes the formation of N(7)-methylguanine at position 46 (m7G46) in tRNA. The sequence is that of tRNA (guanine-N(7)-)-methyltransferase from Oceanobacillus iheyensis (strain DSM 14371 / CIP 107618 / JCM 11309 / KCTC 3954 / HTE831).